The sequence spans 123 residues: MSIIGVGIDVAEIDRFRASLERTPGLADRLFLERELLLPNGERRGIASLAARFAAKEAVAKALGAPGGLYWTDAEVWVEDSGRPRLRVTGTVAARAAELGVQSWHVSLSHDAGVASAVVVAEG.

Residues D9 and E57 each coordinate Mg(2+).

Belongs to the P-Pant transferase superfamily. AcpS family. Requires Mg(2+) as cofactor.

It localises to the cytoplasm. It carries out the reaction apo-[ACP] + CoA = holo-[ACP] + adenosine 3',5'-bisphosphate + H(+). Functionally, transfers the 4'-phosphopantetheine moiety from coenzyme A to a Ser of acyl-carrier-protein. The chain is Holo-[acyl-carrier-protein] synthase from Streptomyces avermitilis (strain ATCC 31267 / DSM 46492 / JCM 5070 / NBRC 14893 / NCIMB 12804 / NRRL 8165 / MA-4680).